The following is a 136-amino-acid chain: Large ribosomal subunit protein uL16 (136 aa).

The protein belongs to the universal ribosomal protein uL16 family. In terms of assembly, part of the 50S ribosomal subunit.

Binds 23S rRNA and is also seen to make contacts with the A and possibly P site tRNAs. This is Large ribosomal subunit protein uL16 from Alteromonas mediterranea (strain DSM 17117 / CIP 110805 / LMG 28347 / Deep ecotype).